The following is a 653-amino-acid chain: Zinc finger CCCH domain-containing protein 54 (653 aa).

Positions 242-261 (NGGGGGGGSPARARRSNGLS) are disordered. Residues 260-287 (LSTRRPCHYFSKGICKNGQNCHYSHHQV) form a C3H1-type zinc finger. One can recognise an HTH OST-type domain in the interval 313-396 (SLETLEMEIT…GQHSVVLAED (84 aa)). The RRM domain occupies 422 to 497 (HQIYLTFPAE…SRVLVKPYRE (76 aa)). The stretch at 537 to 565 (RLMRKQLAEKREMLLEMERRRATVRRLES) forms a coiled coil. The segment at 598-623 (PSLASPDPLEIVSNSQAPPTQAGNIY) is disordered. The segment covering 609 to 620 (VSNSQAPPTQAG) has biased composition (polar residues).

The sequence is that of Zinc finger CCCH domain-containing protein 54 from Oryza sativa subsp. japonica (Rice).